Reading from the N-terminus, the 280-residue chain is Probable endonuclease 4 (280 aa).

Residues H69, H109, E145, D179, H182, H216, D229, H231, and E261 each coordinate Zn(2+).

Belongs to the AP endonuclease 2 family. Zn(2+) is required as a cofactor.

The catalysed reaction is Endonucleolytic cleavage to 5'-phosphooligonucleotide end-products.. Functionally, endonuclease IV plays a role in DNA repair. It cleaves phosphodiester bonds at apurinic or apyrimidinic (AP) sites, generating a 3'-hydroxyl group and a 5'-terminal sugar phosphate. In Aliarcobacter butzleri (strain RM4018) (Arcobacter butzleri), this protein is Probable endonuclease 4.